The sequence spans 113 residues: U11-theraphotoxin-Hhn1a (113 aa).

An N-terminal signal peptide occupies residues 1-21 (MNTVRVTFLLVFVLAVSLGQA). The propeptide occupies 22-74 (DKDENRMEMQEKTEQGKSYLDFAENLLLQKLEELEAKLLEEDSEESRNSRQRR). Residues 61–83 (EEDSEESRNSRQRRCIGEGVPCD) form a disordered region. 3 disulfide bridges follow: Cys75/Cys90, Cys82/Cys95, and Cys89/Cys110.

It belongs to the neurotoxin 14 (magi-1) family. 01 (HNTX-16) subfamily. In terms of tissue distribution, expressed by the venom gland.

It localises to the secreted. Its function is as follows. Probable ion channel inhibitor. This is U11-theraphotoxin-Hhn1a from Cyriopagopus hainanus (Chinese bird spider).